A 309-amino-acid polypeptide reads, in one-letter code: Probable manganese-dependent inorganic pyrophosphatase (309 aa).

Residues His9, Asp13, Asp15, Asp75, His97, and Asp149 each coordinate Mn(2+).

It belongs to the PPase class C family. Requires Mn(2+) as cofactor.

It localises to the cytoplasm. The catalysed reaction is diphosphate + H2O = 2 phosphate + H(+). This chain is Probable manganese-dependent inorganic pyrophosphatase, found in Staphylococcus saprophyticus subsp. saprophyticus (strain ATCC 15305 / DSM 20229 / NCIMB 8711 / NCTC 7292 / S-41).